A 203-amino-acid polypeptide reads, in one-letter code: Large ribosomal subunit protein uL22 (203 aa).

A compositionally biased stretch (polar residues) spans Pro138–Leu167. The segment at Pro138–Lys203 is disordered. Over residues Ser168–Ala177 the composition is skewed to low complexity. The span at Ala183–Leu196 shows a compositional bias: polar residues.

This sequence belongs to the universal ribosomal protein uL22 family. As to quaternary structure, part of the 50S ribosomal subunit.

This protein binds specifically to 23S rRNA; its binding is stimulated by other ribosomal proteins, e.g. L4, L17, and L20. It is important during the early stages of 50S assembly. It makes multiple contacts with different domains of the 23S rRNA in the assembled 50S subunit and ribosome. Its function is as follows. The globular domain of the protein is located near the polypeptide exit tunnel on the outside of the subunit, while an extended beta-hairpin is found that lines the wall of the exit tunnel in the center of the 70S ribosome. This chain is Large ribosomal subunit protein uL22, found in Mesomycoplasma hyopneumoniae (strain 7448) (Mycoplasma hyopneumoniae).